The primary structure comprises 97 residues: Co-chaperonin GroES (97 aa).

This sequence belongs to the GroES chaperonin family. As to quaternary structure, heptamer of 7 subunits arranged in a ring. Interacts with the chaperonin GroEL.

Its subcellular location is the cytoplasm. In terms of biological role, together with the chaperonin GroEL, plays an essential role in assisting protein folding. The GroEL-GroES system forms a nano-cage that allows encapsulation of the non-native substrate proteins and provides a physical environment optimized to promote and accelerate protein folding. GroES binds to the apical surface of the GroEL ring, thereby capping the opening of the GroEL channel. The polypeptide is Co-chaperonin GroES (Klebsiella pneumoniae (strain 342)).